The chain runs to 93 residues: Putative pterin-4-alpha-carbinolamine dehydratase (93 aa).

Belongs to the pterin-4-alpha-carbinolamine dehydratase family.

It catalyses the reaction (4aS,6R)-4a-hydroxy-L-erythro-5,6,7,8-tetrahydrobiopterin = (6R)-L-erythro-6,7-dihydrobiopterin + H2O. In Sulfurisphaera tokodaii (strain DSM 16993 / JCM 10545 / NBRC 100140 / 7) (Sulfolobus tokodaii), this protein is Putative pterin-4-alpha-carbinolamine dehydratase.